We begin with the raw amino-acid sequence, 654 residues long: Acetyl-coenzyme A synthetase (654 aa).

Residues 190–193 and T313 each bind CoA; that span reads RGGK. Residues 389–391, 413–418, D504, and R519 each bind ATP; these read GEP and DTWWQT. Position 527 (S527) interacts with CoA. R530 is an ATP binding site. Residues V541 and V546 each coordinate Mg(2+). The residue at position 613 (K613) is an N6-acetyllysine.

This sequence belongs to the ATP-dependent AMP-binding enzyme family. It depends on Mg(2+) as a cofactor. Post-translationally, acetylated. Deacetylation by the SIR2-homolog deacetylase activates the enzyme.

The catalysed reaction is acetate + ATP + CoA = acetyl-CoA + AMP + diphosphate. In terms of biological role, catalyzes the conversion of acetate into acetyl-CoA (AcCoA), an essential intermediate at the junction of anabolic and catabolic pathways. AcsA undergoes a two-step reaction. In the first half reaction, AcsA combines acetate with ATP to form acetyl-adenylate (AcAMP) intermediate. In the second half reaction, it can then transfer the acetyl group from AcAMP to the sulfhydryl group of CoA, forming the product AcCoA. This chain is Acetyl-coenzyme A synthetase, found in Leptospira borgpetersenii serovar Hardjo-bovis (strain JB197).